Consider the following 621-residue polypeptide: MPPFELGDPIPSETAHAVSVSLPTWSANVGYEEGQDWVVKRMATGYPRFFIHRTIQAFAADIVATHVSTKAKRTSDITAMLFPTPTIASRCVDFIRSRAPADVCSNIEVVNLVLDMSDPEARALEPLCPSISAVIMPQDGFPFAKQYWQHSGDGVSSRRAEFCHGLFKDGLLRPDTELRNAAVSAAKPCRGPKRYQRQASLDAGGNQQTIMHGHIHRATGETAMIQETSRFLEERFGRNLDLSFVHPAKSAIKRRIAGALRSADHDLGGSPSLSEKQMSSNTRGIANLREEDIYLFPCGMNAIFHAHRALYSIRTPPGSTPLKSVNFGFPYVDTLKILEKFNPSGALFYGHGSKSDLDDLETRLESGERYLALFCEFPGNPLLTCPDLVRIRELADKYEFAVVVDETIGTFANVNVLQFADIVVSSLTKIFSGDCNVMGGGAIFNPNSRYYSALKSFVQQQLEDTYWPEDVIFMERNSRDFVARIDRVNANAEAICRVLQDHPLVKTLYYPKYNDSRANYEAVKLPQGGYGGLISVVLKGKKQAVAFYDAIETAKGPSLGTNFTLTSPYVLLAHYQELDWAEQYGVDRNLIRISVGLEGTDELINVFTRALKVAEEQSQYP.

Residue lysine 429 is modified to N6-(pyridoxal phosphate)lysine.

This sequence belongs to the trans-sulfuration enzymes family. MET7 subfamily. Both met-3 and met-7 are required to form a functional cystathionine gamma-synthase. Requires pyridoxal 5'-phosphate as cofactor.

It carries out the reaction O-succinyl-L-homoserine + L-cysteine = L,L-cystathionine + succinate + H(+). It functions in the pathway amino-acid biosynthesis; L-methionine biosynthesis via de novo pathway; L-cystathionine from O-succinyl-L-homoserine: step 1/1. Its function is as follows. Catalyzes the formation of L-cystathionine from O-succinyl-L-homoserine (OSHS) and L-cysteine, via a gamma-replacement reaction. In the absence of thiol, catalyzes gamma-elimination to form 2-oxobutanoate, succinate and ammonia. This Neurospora crassa (strain ATCC 24698 / 74-OR23-1A / CBS 708.71 / DSM 1257 / FGSC 987) protein is Cystathionine gamma-synthase (met-7).